A 625-amino-acid polypeptide reads, in one-letter code: Endoglucanase 13 (625 aa).

The signal sequence occupies residues 1 to 34 (MAATMNKTPATTFLLIPAAASLVLLLAAAASVEA). The Nucleophile role is filled by aspartate 91. Residue histidine 427 is part of the active site. A glycan (N-linked (GlcNAc...) asparagine) is linked at asparagine 440. Residues aspartate 479 and glutamate 488 contribute to the active site. Residues 509 to 530 (ADNTPEYTPAPNAPSPSNGGSP) are disordered.

Belongs to the glycosyl hydrolase 9 (cellulase E) family.

The protein resides in the secreted. It catalyses the reaction Endohydrolysis of (1-&gt;4)-beta-D-glucosidic linkages in cellulose, lichenin and cereal beta-D-glucans.. This Oryza sativa subsp. indica (Rice) protein is Endoglucanase 13 (GLU6).